Here is a 508-residue protein sequence, read N- to C-terminus: Photosystem II CP47 reaction center protein (508 aa).

6 consecutive transmembrane segments (helical) span residues A21–S36, I101–W115, G140–F156, I203–S218, V237–V252, and I457–R472.

This sequence belongs to the PsbB/PsbC family. PsbB subfamily. PSII is composed of 1 copy each of membrane proteins PsbA, PsbB, PsbC, PsbD, PsbE, PsbF, PsbH, PsbI, PsbJ, PsbK, PsbL, PsbM, PsbT, PsbY, PsbZ, Psb30/Ycf12, at least 3 peripheral proteins of the oxygen-evolving complex and a large number of cofactors. It forms dimeric complexes. The cofactor is Binds multiple chlorophylls. PSII binds additional chlorophylls, carotenoids and specific lipids..

It localises to the plastid. It is found in the chloroplast thylakoid membrane. Its function is as follows. One of the components of the core complex of photosystem II (PSII). It binds chlorophyll and helps catalyze the primary light-induced photochemical processes of PSII. PSII is a light-driven water:plastoquinone oxidoreductase, using light energy to abstract electrons from H(2)O, generating O(2) and a proton gradient subsequently used for ATP formation. This Bigelowiella natans (Pedinomonas minutissima) protein is Photosystem II CP47 reaction center protein.